A 366-amino-acid polypeptide reads, in one-letter code: MIRTEEMLLNVGPQHPSTHGVFRLVIKIDGEIIKEATPVIGYLHRGTEKIAESLQYTQIIPYTDRMDYLSAMTNNYVICHAVETMMGLEIPERAEYLRVLAMELGRIASHLVWWGTNLLDIGAVSPFLYAFREREMIINLLNELCGARLTFNYMRVGGVKWDAPDGWIEKVEEFVPYMREQLAGYHDLVSGNEIFLNRVKGVGIYSEEDAISYSLSGANLRCTGVNWDLRKDEPYSIYDRFDFDIPVGSVGDAWDRYVCRMKEIEESLKIVEQAVQQFPKEGAVLAKVPKIIKAPKGEAFVRIESPRGEIGCYIASDGKKEPYRLKFRRPSFYNLQILPKLLKGENIANLITILGGVDIVLGEVDG.

The protein belongs to the complex I 49 kDa subunit family. NDH-1 is composed of 14 different subunits. Subunits NuoB, C, D, E, F, and G constitute the peripheral sector of the complex.

The protein localises to the cell membrane. The enzyme catalyses a quinone + NADH + 5 H(+)(in) = a quinol + NAD(+) + 4 H(+)(out). Functionally, NDH-1 shuttles electrons from NADH, via FMN and iron-sulfur (Fe-S) centers, to quinones in the respiratory chain. The immediate electron acceptor for the enzyme in this species is believed to be a menaquinone. Couples the redox reaction to proton translocation (for every two electrons transferred, four hydrogen ions are translocated across the cytoplasmic membrane), and thus conserves the redox energy in a proton gradient. The protein is NADH-quinone oxidoreductase subunit D of Bacillus cereus (strain ATCC 10987 / NRS 248).